The following is a 359-amino-acid chain: Mineralocorticoid receptor (359 aa).

The nuclear receptor DNA-binding region spans 1–49 (FKRAVEGQHNYLCAGRNDCIIDKIRRKNCPACRVRKCLQAGMNLGARKS). Residues Cys-13, Cys-19, Cys-29, and Cys-32 each contribute to the Zn(2+) site. The NR C4-type zinc-finger motif lies at 13–37 (CAGRNDCIIDKIRRKNCPACRVRKC). The segment at 48–96 (KSKKPGKLKGVNEDSTPTKEGGQTCPGSGGGYLSSGEKELSTSPTNALV) is disordered. Residues 50–107 (KKPGKLKGVNEDSTPTKEGGQTCPGSGGGYLSSGEKELSTSPTNALVPHGPGGGLVTP) are hinge. An NR LBD domain is found at 108–339 (YLPPSICSVL…EFPEMLVEII (232 aa)). 21-hydroxyprogesterone-binding residues include Asn-145 and Gln-151. Residues Asn-145 and Gln-151 each contribute to the aldosterone site. Residues Asn-145 and Gln-151 each coordinate progesterone. An important for coactivator binding region spans residues 157 to 160 (KWAK). Residues Arg-192 and Thr-320 each coordinate 21-hydroxyprogesterone. Aldosterone contacts are provided by Arg-192 and Thr-320. Progesterone contacts are provided by Arg-192 and Thr-320.

It belongs to the nuclear hormone receptor family. NR3 subfamily.

Its subcellular location is the cytoplasm. The protein resides in the nucleus. Receptor for both mineralocorticoids (MC) such as cortisol. Binds to mineralocorticoid response elements (MRE) and transactivates target genes. The effect of MC is to increase ion and water transport and thus raise extracellular fluid volume and blood pressure and lower potassium levels. The polypeptide is Mineralocorticoid receptor (nr3c2) (Oncorhynchus mykiss (Rainbow trout)).